The chain runs to 148 residues: Transcriptional regulator MraZ (148 aa).

SpoVT-AbrB domains are found at residues 5-51 and 80-123; these read VATV…PLPE and AHDI…NEAR.

Belongs to the MraZ family. As to quaternary structure, forms oligomers.

It localises to the cytoplasm. It is found in the nucleoid. The protein is Transcriptional regulator MraZ of Thiobacillus denitrificans (strain ATCC 25259 / T1).